We begin with the raw amino-acid sequence, 61 residues long: Small ribosomal subunit protein uS14 (61 aa).

Cysteine 24, cysteine 27, cysteine 40, and cysteine 43 together coordinate Zn(2+).

This sequence belongs to the universal ribosomal protein uS14 family. Zinc-binding uS14 subfamily. Part of the 30S ribosomal subunit. Contacts proteins S3 and S10. Zn(2+) serves as cofactor.

Binds 16S rRNA, required for the assembly of 30S particles and may also be responsible for determining the conformation of the 16S rRNA at the A site. The polypeptide is Small ribosomal subunit protein uS14 (Staphylococcus aureus (strain USA300 / TCH1516)).